The sequence spans 213 residues: MAALAVSGLSQQVRCFSTSVVRPFAKLVRPPVQIYGIEGRYATALYSAASKQNKLEQVEKELLRVGQILKEPKMAASLLNPYVKRSVKVKSLSDMTAKEKFSPLTSNLINLLAENGRLTNTPAVISAFSTMMSVHRGEVPCTVTTASALDEATLTELKTVLKSFLSKGQVLKLEVKIDPSIMGGMIVRIGEKYVDMSAKTKIQKLSRAMREIL.

The transit peptide at 1–23 (MAALAVSGLSQQVRCFSTSVVRP) directs the protein to the mitochondrion. The short motif at 5-23 (AVSGLSQQVRCFSTSVVRP) is the SIFI-degron element. An N6-acetyllysine mark is found at lysine 54, lysine 60, lysine 70, and lysine 73. Lysine 90 is modified (N6-succinyllysine). An N6-acetyllysine; alternate mark is found at lysine 100, lysine 158, and lysine 162. N6-succinyllysine; alternate occurs at positions 100, 158, and 162. Residues lysine 172, lysine 176, and lysine 192 each carry the N6-acetyllysine modification. Position 199 is an N6-succinyllysine (lysine 199).

This sequence belongs to the ATPase delta chain family. In terms of assembly, component of the ATP synthase complex composed at least of ATP5F1A/subunit alpha, ATP5F1B/subunit beta, ATP5MC1/subunit c (homooctomer), MT-ATP6/subunit a, MT-ATP8/subunit 8, ATP5ME/subunit e, ATP5MF/subunit f, ATP5MG/subunit g, ATP5MK/subunit k, ATP5MJ/subunit j, ATP5F1C/subunit gamma, ATP5F1D/subunit delta, ATP5F1E/subunit epsilon, ATP5PF/subunit F6, ATP5PB/subunit b, ATP5PD/subunit d, ATP5PO/subunit OSCP. ATP synthase complex consists of a soluble F(1) head domain (subunits alpha(3) and beta(3)) - the catalytic core - and a membrane F(0) domain - the membrane proton channel (subunits c, a, 8, e, f, g, k and j). These two domains are linked by a central stalk (subunits gamma, delta, and epsilon) rotating inside the F1 region and a stationary peripheral stalk (subunits F6, b, d, and OSCP). Post-translationally, acetylation at Lys-162 decreases ATP production. Deacetylated by SIRT3. In response to mitochondrial stress, the precursor protein is ubiquitinated by the SIFI complex in the cytoplasm before mitochondrial import, leading to its degradation. Within the SIFI complex, UBR4 initiates ubiquitin chain that are further elongated or branched by KCMF1.

Its subcellular location is the mitochondrion. The protein resides in the mitochondrion inner membrane. In terms of biological role, subunit OSCP, of the mitochondrial membrane ATP synthase complex (F(1)F(0) ATP synthase or Complex V) that produces ATP from ADP in the presence of a proton gradient across the membrane which is generated by electron transport complexes of the respiratory chain. ATP synthase complex consist of a soluble F(1) head domain - the catalytic core - and a membrane F(1) domain - the membrane proton channel. These two domains are linked by a central stalk rotating inside the F(1) region and a stationary peripheral stalk. During catalysis, ATP synthesis in the catalytic domain of F(1) is coupled via a rotary mechanism of the central stalk subunits to proton translocation. In vivo, can only synthesize ATP although its ATP hydrolase activity can be activated artificially in vitro. Part of the complex F(0) domain. Part of the complex F(0) domain and the peripheric stalk, which acts as a stator to hold the catalytic alpha(3)beta(3) subcomplex and subunit a/ATP6 static relative to the rotary elements. In Bos taurus (Bovine), this protein is ATP synthase peripheral stalk subunit OSCP, mitochondrial.